The following is a 213-amino-acid chain: Putative manganese efflux pump MntP (213 aa).

6 consecutive transmembrane segments (helical) span residues 3 to 23 (ILSIVLTGFGLAMDAFAVSVA), 36 to 56 (ALKVALFFGGFQALMPLIGWG), 67 to 87 (AFDHWIAFILLSFIGGKMIFE), 130 to 150 (LAIATSIDALAVGVSFAFLGI), 152 to 172 (IVQTIIIIGIITFVLCFLGVI), and 187 to 207 (IVGGVILILIGINILLEHTGI).

Belongs to the MntP (TC 9.B.29) family.

Its subcellular location is the cell membrane. Functionally, probably functions as a manganese efflux pump. This Clostridium perfringens (strain 13 / Type A) protein is Putative manganese efflux pump MntP.